We begin with the raw amino-acid sequence, 173 residues long: Co-chaperone protein HscB homolog (173 aa).

A J domain is found at 5–77 (CHFALFELKP…PKRARYLLAM (73 aa)).

The protein belongs to the HscB family. Interacts with HscA and stimulates its ATPase activity.

Functionally, co-chaperone involved in the maturation of iron-sulfur cluster-containing proteins. Seems to help targeting proteins to be folded toward HscA. The polypeptide is Co-chaperone protein HscB homolog (Pseudomonas syringae pv. tomato (strain ATCC BAA-871 / DC3000)).